Reading from the N-terminus, the 78-residue chain is Protein SlyX homolog (78 aa).

Belongs to the SlyX family.

This chain is Protein SlyX homolog, found in Xylella fastidiosa (strain M23).